Consider the following 64-residue polypeptide: Conotoxin mr5.3 (64 aa).

The signal sequence occupies residues M1–S19. A propeptide spanning residues V20 to N48 is cleaved from the precursor. E56 and E60 each carry 4-carboxyglutamate.

Contains 2 disulfide bonds that can be either 'C1-C3, C2-C4' or 'C1-C4, C2-C3', since these disulfide connectivities have been observed for conotoxins with cysteine framework V (for examples, see AC P0DQQ7 and AC P81755). In terms of tissue distribution, expressed by the venom duct.

It localises to the secreted. This Conus marmoreus (Marble cone) protein is Conotoxin mr5.3.